A 271-amino-acid chain; its full sequence is Dermonecrotic toxin SpeSicTox-betaIF1 (271 aa).

The active site involves H3. The Mg(2+) site is built by E23 and D25. H39 acts as the Nucleophile in catalysis. Cystine bridges form between C43/C49 and C45/C188. D83 is a Mg(2+) binding site.

The protein belongs to the arthropod phospholipase D family. Class II subfamily. Mg(2+) is required as a cofactor. As to expression, expressed by the venom gland.

The protein localises to the secreted. It carries out the reaction an N-(acyl)-sphingosylphosphocholine = an N-(acyl)-sphingosyl-1,3-cyclic phosphate + choline. It catalyses the reaction an N-(acyl)-sphingosylphosphoethanolamine = an N-(acyl)-sphingosyl-1,3-cyclic phosphate + ethanolamine. The enzyme catalyses a 1-acyl-sn-glycero-3-phosphocholine = a 1-acyl-sn-glycero-2,3-cyclic phosphate + choline. The catalysed reaction is a 1-acyl-sn-glycero-3-phosphoethanolamine = a 1-acyl-sn-glycero-2,3-cyclic phosphate + ethanolamine. Functionally, dermonecrotic toxins cleave the phosphodiester linkage between the phosphate and headgroup of certain phospholipids (sphingolipid and lysolipid substrates), forming an alcohol (often choline) and a cyclic phosphate. This toxin acts on sphingomyelin (SM). It may also act on ceramide phosphoethanolamine (CPE), lysophosphatidylcholine (LPC) and lysophosphatidylethanolamine (LPE), but not on lysophosphatidylserine (LPS), and lysophosphatidylglycerol (LPG). It acts by transphosphatidylation, releasing exclusively cyclic phosphate products as second products. Induces dermonecrosis, hemolysis, increased vascular permeability, edema, inflammatory response, and platelet aggregation. The protein is Dermonecrotic toxin SpeSicTox-betaIF1 of Sicarius peruensis (Six-eyed sand spider).